Here is a 383-residue protein sequence, read N- to C-terminus: Opsin Rh4 (383 aa).

The Extracellular segment spans residues 1-57; the sequence is MDIAGSLCNASEGPVLRPEARVSGNGDLQFLGWNVPPDQIQHIPEHWLTQLEPPASM. N9 carries N-linked (GlcNAc...) asparagine glycosylation. A helical transmembrane segment spans residues 58-82; the sequence is HYMLGVFYIFLFCASTVGNGMVIWI. Residues 83 to 94 are Cytoplasmic-facing; it reads FSTSKALRTPSN. Residues 95-117 traverse the membrane as a helical segment; sequence MFVLNLAVFDFIMCLKAPIFIYN. The Extracellular segment spans residues 118–133; that stretch reads SFHRGFALGNTGCQIF. C130 and C207 form a disulfide bridge. A helical membrane pass occupies residues 134–153; it reads AAIGSYSGIGAGMTNAAIGY. Over 154 to 171 the chain is Cytoplasmic; the sequence is DRLNVITKPMNRNMTFTK. The helical transmembrane segment at 172-196 threads the bilayer; that stretch reads AIIMNVIIWLYCTPWVVLPLTQFWD. Over 197–220 the chain is Extracellular; sequence RFVPEGYLTSCTFDYLTDNFDTRL. The helical transmembrane segment at 221-248 threads the bilayer; that stretch reads FVGTIFFFSFVCPTLMIIYYYSQIVGHV. The Cytoplasmic segment spans residues 249 to 284; the sequence is FSHEKALREQAKKMNVESLRSNVDKSKDTAEIRIAK. The chain crosses the membrane as a helical span at residues 285–308; sequence AAITICFLFFVSWTPYGVMSLIGA. Topologically, residues 309–316 are extracellular; sequence FGDKSLLT. Residues 317-341 form a helical membrane-spanning segment; sequence PGATMIPACTCKLVACIDPFVYAIS. Position 328 is an N6-(retinylidene)lysine (K328). Residues 342-383 lie on the Cytoplasmic side of the membrane; it reads HPRYRMELQKRCPWLAIDEKAPESSSAASTTTTQEQQQTTAA. The segment at 361–383 is disordered; sequence KAPESSSAASTTTTQEQQQTTAA. Residues 364-383 show a composition bias toward low complexity; it reads ESSSAASTTTTQEQQQTTAA.

Belongs to the G-protein coupled receptor 1 family. Opsin subfamily. Post-translationally, phosphorylated on some or all of the serine and threonine residues present in the C-terminal region.

The protein resides in the membrane. Its function is as follows. Visual pigments are the light-absorbing molecules that mediate vision. They consist of an apoprotein, opsin, covalently linked to cis-retinal. The chain is Opsin Rh4 (Rh4) from Drosophila virilis (Fruit fly).